A 182-amino-acid chain; its full sequence is Phospholipase A2 inhibitor gamma subunit A (182 aa).

Cystine bridges form between cysteine 3–cysteine 27, cysteine 6–cysteine 13, cysteine 20–cysteine 48, cysteine 54–cysteine 75, cysteine 76–cysteine 81, cysteine 99–cysteine 124, cysteine 117–cysteine 146, and cysteine 150–cysteine 172. N-linked (GlcNAc...) asparagine glycosylation is present at asparagine 157.

The protein belongs to the CNF-like-inhibitor family. In terms of assembly, heterotrimer of 2 subunits A and 1 subunit B. N-glycosylation is not important for activity, since deglycosylation does not change its PLA2 inhibitory activity. In terms of tissue distribution, expressed by the liver.

It localises to the secreted. Functionally, strongly inhibits its own venom PLA2 and all other PLA2s tested including Elapid, Crotalid and Viperid venom PLA2s, as well as honeybee PLA2s. The chain is Phospholipase A2 inhibitor gamma subunit A from Laticauda semifasciata (Black-banded sea krait).